The following is a 413-amino-acid chain: Tyrosine--tRNA ligase (413 aa).

Tyr34 contributes to the L-tyrosine binding site. The 'HIGH' region motif lies at 39 to 48; the sequence is CTAQSLHVGN. Residues Tyr171 and Gln175 each coordinate L-tyrosine. The 'KMSKS' region signature appears at 231 to 235; sequence KMGKT. Lys234 contacts ATP. The 66-residue stretch at 346-411 folds into the S4 RNA-binding domain; that stretch reads IPITELLVTI…GKKCHILVKI (66 aa).

It belongs to the class-I aminoacyl-tRNA synthetase family. TyrS type 1 subfamily. In terms of assembly, homodimer.

It localises to the cytoplasm. It catalyses the reaction tRNA(Tyr) + L-tyrosine + ATP = L-tyrosyl-tRNA(Tyr) + AMP + diphosphate + H(+). Functionally, catalyzes the attachment of tyrosine to tRNA(Tyr) in a two-step reaction: tyrosine is first activated by ATP to form Tyr-AMP and then transferred to the acceptor end of tRNA(Tyr). The polypeptide is Tyrosine--tRNA ligase (Orientia tsutsugamushi (strain Boryong) (Rickettsia tsutsugamushi)).